We begin with the raw amino-acid sequence, 184 residues long: uncharacterized protein (184 aa).

The disordered stretch occupies residues 130 to 149; that stretch reads DKDDDKKKKKKDDKKDDPCN.

It localises to the virion. This is an uncharacterized protein from Acanthamoeba polyphaga (Amoeba).